Here is a 167-residue protein sequence, read N- to C-terminus: Homing endonuclease I-ApeII (167 aa).

The protein belongs to the LAGLIDADG endonuclease family.

Endonuclease involved in rRNA intron I-gamma homing. The polypeptide is Homing endonuclease I-ApeII (apeII) (Aeropyrum pernix (strain ATCC 700893 / DSM 11879 / JCM 9820 / NBRC 100138 / K1)).